The primary structure comprises 96 residues: Transcription and mRNA export factor ENY2 (96 aa).

Belongs to the ENY2 family. Component of the nuclear pore complex (NPC)-associated TREX-2 complex (transcription and export complex 2). Component of the SAGA transcription coactivator-HAT complex. Within the SAGA complex, participates in a subcomplex of SAGA called the DUB module (deubiquitination module).

The protein localises to the nucleus. The protein resides in the nucleoplasm. Its function is as follows. Involved in mRNA export coupled transcription activation by association with both the TREX-2 and the SAGA complexes. The transcription regulatory histone acetylation (HAT) complex SAGA is a multiprotein complex that activates transcription by remodeling chromatin and mediating histone acetylation and deubiquitination. Within the SAGA complex, participates in a subcomplex that specifically deubiquitinates histones. The SAGA complex is recruited to specific gene promoters by activators, where it is required for transcription. The TREX-2 complex functions in docking export-competent ribonucleoprotein particles (mRNPs) to the nuclear entrance of the nuclear pore complex (nuclear basket). TREX-2 participates in mRNA export and accurate chromatin positioning in the nucleus by tethering genes to the nuclear periphery. The sequence is that of Transcription and mRNA export factor ENY2 from Taeniopygia guttata (Zebra finch).